The chain runs to 146 residues: Urease accessory protein UreE 1 (146 aa).

It belongs to the UreE family.

The protein localises to the cytoplasm. In terms of biological role, involved in urease metallocenter assembly. Binds nickel. Probably functions as a nickel donor during metallocenter assembly. This is Urease accessory protein UreE 1 from Pseudomonas syringae pv. syringae (strain B728a).